We begin with the raw amino-acid sequence, 236 residues long: Bax inhibitor 1 (236 aa).

Residues 1-29 (MNIFDRKINFDALFKFSHITPSTQQHLKK) are Cytoplasmic-facing. Lysine 7 participates in a covalent cross-link: Glycyl lysine isopeptide (Lys-Gly) (interchain with G-Cter in ubiquitin). A helical transmembrane segment spans residues 30-50 (VYASFALCMFVAAAGAYIHVV). Residues 51-52 (TH) lie on the Lumenal side of the membrane. Residues 53-73 (FIQAGLLSALGSLGLMIWLMA) traverse the membrane as a helical segment. Residues 74–86 (TPHSHETEQKRLG) lie on the Cytoplasmic side of the membrane. The helical transmembrane segment at 87–107 (LLAGFAFLTGVGLGPALDLCI) threads the bilayer. The Lumenal portion of the chain corresponds to 108–112 (AINPS). A helical transmembrane segment spans residues 113–133 (ILPTAFMGTAMIFTCFTLSAL). The Cytoplasmic segment spans residues 134 to 139 (YARRRS). A helical membrane pass occupies residues 140-160 (YLFLGGILMSAMSLMLLSSLG). Residues 161 to 166 (NLFFGS) lie on the Lumenal side of the membrane. Residues 167 to 187 (VWLFQANLYMGLVVMCGFVLF) traverse the membrane as a helical segment. Over 188-206 (DTQLIIEKAENGDKDYIWH) the chain is Cytoplasmic. The segment at residues 207–227 (CVDLFLDFVTLFRKLMMILAM) is an intramembrane region (helical). Over 228-236 (NEKDKKKKK) the chain is Cytoplasmic.

This sequence belongs to the BI1 family. As to quaternary structure, interacts with BCL2 and BCL2L1. Interacts with ERN1. Post-translationally, ubiquitinated by BFAR, leading to proteasomal degradation.

It localises to the endoplasmic reticulum membrane. Endoplasmic reticulum (ER)-resident protein that confers cellular protection as an anti-apoptotic protein by limiting multiple stress-inducing pathways surrounding the endoplasmic reticulum and mitochondria. Inhibits the activities of the key sensor for the endoplasmic reticulum unfolded protein response IRE1alpha/ERN1 both directly and by blocking BAX/BAK binding. Modulates ER calcium homeostasis by acting as a calcium-leak channel. Negatively regulates autophagy and autophagosome formation, especially during periods of nutrient deprivation, and reduces cell survival during starvation. The sequence is that of Bax inhibitor 1 (TMBIM6) from Bos taurus (Bovine).